Here is a 217-residue protein sequence, read N- to C-terminus: Ras-related protein Rab-39A (217 aa).

GTP contacts are provided by serine 17, glycine 20, lysine 21, serine 22, cysteine 23, and threonine 44. Serine 22 contributes to the Mg(2+) binding site. The segment at proline 39–valine 47 is switch-I. 2 residues coordinate Mg(2+): threonine 44 and aspartate 68. Residues glycine 71, histidine 127, lysine 128, aspartate 130, alanine 158, and lysine 159 each coordinate GTP. Positions glycine 71–valine 87 are switch-II. Residues cysteine 215 and cysteine 217 are each lipidated (S-geranylgeranyl cysteine). Cysteine methyl ester is present on cysteine 217.

Belongs to the small GTPase superfamily. Rab family. As to quaternary structure, interacts (GDP-bound) with C9orf72; C9orf72 acts as a GEF for RAB39A. Interacts (GTP-bound) with HOPS complex components VPS39 and VPS41, and STX17; interaction between HOPS components and RAB39A contributes to obtaining a functional HOPS complex that promotes membrane fusion driven by STX17-SNAP29-VAMP8. Interacts with BECN1. Probably associates with the PI3K (PI3KC3/PI3K-III/class III phosphatidylinositol 3-kinase) complex. Interacts with UACA. Interacts with isoform a of RASSF1. Does not interact with isoform c of RASSF1. It depends on Mg(2+) as a cofactor. Post-translationally, prenylated. Prenylation is required for association with cellular membranes.

It localises to the cell membrane. The protein resides in the cytoplasmic vesicle. The protein localises to the phagosome membrane. Its subcellular location is the lysosome membrane. It is found in the autolysosome membrane. The enzyme catalyses GTP + H2O = GDP + phosphate + H(+). Its activity is regulated as follows. Regulated by guanine nucleotide exchange factors (GEFs) including c9Orf72, which promote the exchange of bound GDP for free GTP. Regulated by GTPase activating proteins (GAPs) which increase the GTP hydrolysis activity. Inhibited by GDP dissociation inhibitors (GDIs). In terms of biological role, the small GTPases Rab are key regulators of intracellular membrane trafficking, from the formation of transport vesicles to their fusion with membranes. Rabs cycle between an inactive GDP-bound form and an active GTP-bound form that is able to recruit to membranes different sets of downstream effectors directly responsible for vesicle formation, movement, tethering and fusion. RAB39A regulates autophagosome-lysosome fusion via recruitment of the HOPS endosomal tethering complex onto lysosomes; this process involves lysosomal RAB39A and autophagosomal RAB2A recruitment of HOPS subcomplexes VPS41-VPS16-VPS18-VPS33A and VPS39-VPS11, respectively, which assemble into a functional complex to mediate membrane tethering and SNAREs-driven membrane fusion. Also negatively regulates lipopolysaccharide (LPS)-induced autophagosome formation in macrophages, possibly by implicating PI3K. Promotes the delivery of MHC-I molecules from the ER to phagosomes and the generation of peptide-loaded MHC-I complexes in phagosomes, thus enhancing antigen cross-presentation by dendritic cells. Plays a role in the maturation and acidification of phagosomes that engulf pathogens, such as S.aureus and M.tuberculosis. Plays a role in the fusion of phagosomes with lysosomes. May be involved in multiple neurite formation. This chain is Ras-related protein Rab-39A, found in Homo sapiens (Human).